The primary structure comprises 192 residues: I-Kappa-B like protein H1 (192 aa).

ANK repeat units follow at residues 94 to 126 (KGAQ…DING), 131 to 161 (AGLT…DVKV), and 165 to 192 (GKET…SKKM).

This sequence belongs to the polydnaviridae I-Kappa-B-like protein family.

Functionally, suppresses the host immune response through NF-kappa-B inactivation. Possesses ankyrin repeat domains required for NF-kappa-B binding but lacks the regulatory regions required for dissociation from NF-kappa-B and degradation. Therefore, prevents host NF-kappa-B release and subsequent activation. This Microplitis demolitor bracovirus (isolate Webb) (MdBV) protein is I-Kappa-B like protein H1 (H4).